The primary structure comprises 338 residues: MENLDALVSQALEAVRHTEDVNALEQIRVHYLGKKGELTQVMKTLGDLPAEERPKVGALINVAKEKVQDALNVRKTELEGAALAARLAAERIDVTLPGRGQPSGGLHPVTRTLERIEQCFSRIGYEVAEGPEVEDDYHNFEALNIPGHHPARAMHDTFYFNANMLLRTHTSPVQVRTMESQQPPIRIVCPGRVYRCDSDLTHSPMFHQVEGLLVDEGVSFADLKGTIEEFLRAFFEKQLEVRFRPSFFPFTEPSAEVDIQCVICSGNGCRVCKQTGWLEVMGCGMVHPNVLRMSNIDPEKFQGFAFGMGAERLAMLRYGVNDLRLFFDNDLRFLGQFR.

Glu-252 serves as a coordination point for Mg(2+).

The protein belongs to the class-II aminoacyl-tRNA synthetase family. Phe-tRNA synthetase alpha subunit type 1 subfamily. Tetramer of two alpha and two beta subunits. Requires Mg(2+) as cofactor.

The protein resides in the cytoplasm. The catalysed reaction is tRNA(Phe) + L-phenylalanine + ATP = L-phenylalanyl-tRNA(Phe) + AMP + diphosphate + H(+). The protein is Phenylalanine--tRNA ligase alpha subunit of Pseudomonas paraeruginosa (strain DSM 24068 / PA7) (Pseudomonas aeruginosa (strain PA7)).